The sequence spans 470 residues: Pyoverdine export outer membrane protein OpmQ (470 aa).

Positions 1-18 (MTLPRHLCLLPLSLSLLA) are cleaved as a signal peptide. Residue cysteine 19 is the site of N-palmitoyl cysteine attachment. Cysteine 19 carries the S-diacylglycerol cysteine lipid modification.

It belongs to the outer membrane factor (OMF) (TC 1.B.17) family. Part of the tripartite efflux system PvdRT-OpmQ, which is composed of an inner membrane component with both ATPase and permease domains, PvdT, a periplasmic membrane fusion protein, PvdR, and an outer membrane component, OpmQ.

The protein resides in the cell outer membrane. Functionally, part of the tripartite efflux system PvdRT-OpmQ required for the secretion into the extracellular milieu of the siderophore pyoverdine (PVD), which is involved in iron acquisition. The system is responsible for export of newly synthesized PVD after the final steps of biosynthesis have taken place in the periplasm. It is also responsible for recycling of PVD after internalization of ferri-PVD into the periplasm by the outer-membrane receptor FpvA and release of iron from PVD, thus making PVD available for new cycles of iron uptake. Contributes to resistance against ampicillin. This is Pyoverdine export outer membrane protein OpmQ from Pseudomonas putida (strain ATCC 47054 / DSM 6125 / CFBP 8728 / NCIMB 11950 / KT2440).